Reading from the N-terminus, the 277-residue chain is Anamorsin homolog (277 aa).

Residues Met-1–Val-134 are N-terminal SAM-like domain. A linker region spans residues Ser-135–Val-191. [2Fe-2S] cluster is bound by residues Cys-199, Cys-210, Cys-213, and Cys-215. Positions Cys-199–Cys-215 are fe-S binding site A. Residues Cys-238, Cys-241, Cys-249, and Cys-252 each contribute to the [4Fe-4S] cluster site. Short sequence motifs (cx2C motif) lie at residues Cys-238–Cys-241 and Cys-249–Cys-252. The fe-S binding site B stretch occupies residues Cys-238–Cys-252.

The protein belongs to the anamorsin family. Monomer. It depends on [2Fe-2S] cluster as a cofactor. [4Fe-4S] cluster is required as a cofactor.

It localises to the cytoplasm. Its subcellular location is the mitochondrion intermembrane space. Component of the cytosolic iron-sulfur (Fe-S) protein assembly (CIA) machinery. Required for the maturation of extramitochondrial Fe-S proteins. Part of an electron transfer chain functioning in an early step of cytosolic Fe-S biogenesis, facilitating the de novo assembly of a [4Fe-4S] cluster on the cytosolic Fe-S scaffold complex. Electrons are transferred from NADPH via a FAD- and FMN-containing diflavin oxidoreductase. Together with the diflavin oxidoreductase, also required for the assembly of the diferric tyrosyl radical cofactor of ribonucleotide reductase (RNR), probably by providing electrons for reduction during radical cofactor maturation in the catalytic small subunit. This is Anamorsin homolog from Phytophthora infestans (strain T30-4) (Potato late blight agent).